The chain runs to 144 residues: Thyrostimulin alpha-2 subunit (144 aa).

The signal sequence occupies residues 1–41 (MGRRDSGRAVAQRYRGVTRGVTVIACLMVVCACVGLCDATG). Intrachain disulfides connect Cys52–Cys107, Cys66–Cys121, Cys76–Cys136, and Cys80–Cys138.

The protein belongs to the glycoprotein hormones subunit alpha family. As to quaternary structure, heterodimer with GPHB5; non-covalently-linked. As to expression, expressed by the venom duct.

It is found in the secreted. The protein is Thyrostimulin alpha-2 subunit of Conus victoriae (Queen Victoria cone).